Here is a 966-residue protein sequence, read N- to C-terminus: Aminopeptidase N (966 aa).

At 1–8 the chain is on the cytoplasmic side; it reads MAKGFYIS. A helical; Signal-anchor for type II membrane protein transmembrane segment spans residues 9–32; it reads KSLGILGILLGVAALCTIVALSVV. A cytosolic Ser/Thr-rich junction region spans residues 33-65; it reads YRQEKNKNTSQSPSMAPLNPTATSSPATTLDQN. The Extracellular segment spans residues 33-966; that stretch reads YRQEKNKNTS…VLAWFTANSA (934 aa). Residues Asn-40 and Asn-125 are each glycosylated (N-linked (GlcNAc...) asparagine). The segment at 40–61 is disordered; that stretch reads NTSQSPSMAPLNPTATSSPATT. The metalloprotease stretch occupies residues 66-966; sequence LPWNRYRLPK…VLAWFTANSA (901 aa). Tyr-173 bears the Sulfotyrosine mark. N-linked (GlcNAc...) asparagine glycosylation is found at Asn-259 and Asn-315. A substrate-binding site is contributed by 348 to 352; that stretch reads GAMEN. Residue His-384 participates in Zn(2+) binding. The Proton acceptor role is filled by Glu-385. 2 residues coordinate Zn(2+): His-388 and Glu-407. Sulfotyrosine is present on residues Tyr-415 and Tyr-420. N-linked (GlcNAc...) asparagine glycans are attached at residues Asn-552, Asn-570, Asn-624, and Asn-734. Intrachain disulfides connect Cys-760-Cys-767 and Cys-797-Cys-833. N-linked (GlcNAc...) asparagine glycosylation is present at Asn-817. Tyr-852 is modified (phosphotyrosine). Position 912 is a sulfotyrosine (Tyr-912).

It belongs to the peptidase M1 family. As to quaternary structure, homodimer. Interacts with SLC6A19. The cofactor is Zn(2+). In terms of processing, sulfated. N- and O-glycosylated. Post-translationally, may undergo proteolysis and give rise to a soluble form.

It is found in the cell membrane. It carries out the reaction Release of an N-terminal amino acid, Xaa-|-Yaa- from a peptide, amide or arylamide. Xaa is preferably Ala, but may be most amino acids including Pro (slow action). When a terminal hydrophobic residue is followed by a prolyl residue, the two may be released as an intact Xaa-Pro dipeptide.. Broad specificity aminopeptidase which plays a role in the final digestion of peptides generated from hydrolysis of proteins by gastric and pancreatic proteases. Also involved in the processing of various peptides including peptide hormones, such as angiotensin III and IV, neuropeptides, and chemokines. May also be involved the cleavage of peptides bound to major histocompatibility complex class II molecules of antigen presenting cells. May have a role in angiogenesis and promote cholesterol crystallization. May have a role in amino acid transport by acting as binding partner of amino acid transporter SLC6A19 and regulating its activity. The sequence is that of Aminopeptidase N (ANPEP) from Oryctolagus cuniculus (Rabbit).